Reading from the N-terminus, the 211-residue chain is Pyridoxine/pyridoxamine 5'-phosphate oxidase (211 aa).

Substrate is bound by residues 7-10 (RREY) and K65. Residues 60 to 65 (RIVLLK), 75 to 76 (YT), R81, K82, and Q104 contribute to the FMN site. Substrate-binding residues include Y122, R126, and S130. Residues 139–140 (QS) and W184 each bind FMN. 190-192 (RLH) is a substrate binding site. R194 provides a ligand contact to FMN.

The protein belongs to the pyridoxamine 5'-phosphate oxidase family. As to quaternary structure, homodimer. It depends on FMN as a cofactor.

The catalysed reaction is pyridoxamine 5'-phosphate + O2 + H2O = pyridoxal 5'-phosphate + H2O2 + NH4(+). It carries out the reaction pyridoxine 5'-phosphate + O2 = pyridoxal 5'-phosphate + H2O2. The protein operates within cofactor metabolism; pyridoxal 5'-phosphate salvage; pyridoxal 5'-phosphate from pyridoxamine 5'-phosphate: step 1/1. It participates in cofactor metabolism; pyridoxal 5'-phosphate salvage; pyridoxal 5'-phosphate from pyridoxine 5'-phosphate: step 1/1. Catalyzes the oxidation of either pyridoxine 5'-phosphate (PNP) or pyridoxamine 5'-phosphate (PMP) into pyridoxal 5'-phosphate (PLP). This Vibrio parahaemolyticus serotype O3:K6 (strain RIMD 2210633) protein is Pyridoxine/pyridoxamine 5'-phosphate oxidase.